The primary structure comprises 374 residues: Succinyl-diaminopimelate desuccinylase (374 aa).

Histidine 66 contributes to the Zn(2+) binding site. The active site involves aspartate 68. Aspartate 99 is a binding site for Zn(2+). Glutamate 133 serves as the catalytic Proton acceptor. Zn(2+) is bound by residues glutamate 134, glutamate 162, and histidine 348.

Belongs to the peptidase M20A family. DapE subfamily. In terms of assembly, homodimer. Zn(2+) is required as a cofactor. The cofactor is Co(2+).

The catalysed reaction is N-succinyl-(2S,6S)-2,6-diaminopimelate + H2O = (2S,6S)-2,6-diaminopimelate + succinate. It participates in amino-acid biosynthesis; L-lysine biosynthesis via DAP pathway; LL-2,6-diaminopimelate from (S)-tetrahydrodipicolinate (succinylase route): step 3/3. Its function is as follows. Catalyzes the hydrolysis of N-succinyl-L,L-diaminopimelic acid (SDAP), forming succinate and LL-2,6-diaminopimelate (DAP), an intermediate involved in the bacterial biosynthesis of lysine and meso-diaminopimelic acid, an essential component of bacterial cell walls. This Coxiella burnetii (strain RSA 331 / Henzerling II) protein is Succinyl-diaminopimelate desuccinylase.